The primary structure comprises 380 residues: Flap endonuclease 1-A (380 aa).

The segment at 1-105 is N-domain; that stretch reads MGIKGLTKLL…QELAKRYSKR (105 aa). A Mg(2+)-binding site is contributed by D34. R71 is a DNA binding site. The Mg(2+) site is built by D87, E159, E161, D180, and D182. The I-domain stretch occupies residues 123–254; that stretch reads AIEKFSKRTV…QTALKLIRQH (132 aa). Residue E159 participates in DNA binding. Residues G232 and D234 each coordinate DNA. Residue D234 coordinates Mg(2+). Residues 336-344 are interaction with PCNA; the sequence is SQGRLESFF. The tract at residues 351-380 is disordered; it reads SVPLKRKDTSEKPTKAVANKKTKGAGGKKK. A compositionally biased stretch (basic and acidic residues) spans 355–364; that stretch reads KRKDTSEKPT. Basic residues predominate over residues 368 to 380; that stretch reads ANKKTKGAGGKKK.

It belongs to the XPG/RAD2 endonuclease family. FEN1 subfamily. As to quaternary structure, interacts with PCNA. Three molecules of FEN1 bind to one PCNA trimer with each molecule binding to one PCNA monomer. PCNA stimulates the nuclease activity without altering cleavage specificity. Mg(2+) serves as cofactor. In terms of processing, phosphorylated. Phosphorylation upon DNA damage induces relocalization to the nuclear plasma. As to expression, strongly expressed in proliferating tissues: root and shoot apical meristem, tiller bud, leaf, ligule primordia, marginal meristem of young leaves and panicles. Not expressed in mature leaves when exposed to UV.

The protein localises to the nucleus. It localises to the nucleolus. The protein resides in the nucleoplasm. Its subcellular location is the mitochondrion. With respect to regulation, inhibited by NaCl. Structure-specific nuclease with 5'-flap endonuclease and 5'-3' exonuclease activities involved in DNA replication and repair. During DNA replication, cleaves the 5'-overhanging flap structure that is generated by displacement synthesis when DNA polymerase encounters the 5'-end of a downstream Okazaki fragment. It enters the flap from the 5'-end and then tracks to cleave the flap base, leaving a nick for ligation. Also involved in the long patch base excision repair (LP-BER) pathway, by cleaving within the apurinic/apyrimidinic (AP) site-terminated flap. Acts as a genome stabilization factor that prevents flaps from equilibrating into structures that lead to duplications and deletions. Also possesses 5'-3' exonuclease activity on nicked or gapped double-stranded DNA, and exhibits RNase H activity. Also involved in replication and repair of rDNA and in repairing mitochondrial DNA. May be required for cell proliferation. In Oryza sativa subsp. japonica (Rice), this protein is Flap endonuclease 1-A.